The primary structure comprises 766 residues: Dolichyl pyrophosphate Glc1Man9GlcNAc2 alpha-1,3-glucosyltransferase (766 aa).

Helical transmembrane passes span 6–26, 60–80, 96–116, 156–176, 190–210, 228–248, 324–344, 350–370, 395–415, 423–443, 452–472, and 482–502; these read LVLA…PAYV, YPPF…FFGF, ILIF…AVCA, SIHF…LFFI, ILLN…FYYL, AISL…PFIH, PMGT…GLVI, ADFS…GYHV, ILIH…FTPF, ICVS…LMPL, VASW…HKWL, and LMAI…ALIW.

Belongs to the ALG6/ALG8 glucosyltransferase family.

The protein localises to the endoplasmic reticulum membrane. The catalysed reaction is an alpha-D-Glc-(1-&gt;3)-alpha-D-Man-(1-&gt;2)-alpha-D-Man-(1-&gt;2)-alpha-D-Man-(1-&gt;3)-[alpha-D-Man-(1-&gt;2)-alpha-D-Man-(1-&gt;3)-[alpha-D-Man-(1-&gt;2)-alpha-D-Man-(1-&gt;6)]-alpha-D-Man-(1-&gt;6)]-beta-D-Man-(1-&gt;4)-beta-D-GlcNAc-(1-&gt;4)-alpha-D-GlcNAc-diphospho-di-trans,poly-cis-dolichol + a di-trans,poly-cis-dolichyl beta-D-glucosyl phosphate = an alpha-D-Glc-(1-&gt;3)-alpha-D-Glc-(1-&gt;3)-alpha-D-Man-(1-&gt;2)-alpha-D-Man-(1-&gt;2)-alpha-D-Man-(1-&gt;3)-[alpha-D-Man-(1-&gt;2)-alpha-D-Man-(1-&gt;3)-[alpha-D-Man-(1-&gt;2)-alpha-D-Man-(1-&gt;6)]-alpha-D-Man-(1-&gt;6)]-beta-D-Man-(1-&gt;4)-beta-D-GlcNAc-(1-&gt;4)-alpha-D-GlcNAc-diphospho-di-trans,poly-cis-dolichol + a di-trans,poly-cis-dolichyl phosphate + H(+). The protein operates within protein modification; protein glycosylation. Its function is as follows. Dolichyl pyrophosphate Glc1Man9GlcNAc2 alpha-1,3-glucosyltransferase that operates in the biosynthetic pathway of dolichol-linked oligosaccharides, the glycan precursors employed in protein asparagine (N)-glycosylation. The assembly of dolichol-linked oligosaccharides begins on the cytosolic side of the endoplasmic reticulum membrane and finishes in its lumen. The sequential addition of sugars to dolichol pyrophosphate produces dolichol-linked oligosaccharides containing fourteen sugars, including two GlcNAcs, nine mannoses and three glucoses. Once assembled, the oligosaccharide is transferred from the lipid to nascent proteins by oligosaccharyltransferases. In the lumen of the endoplasmic reticulum, adds the second glucose residue from dolichyl phosphate glucose (Dol-P-Glc) onto the lipid-linked oligosaccharide intermediate Glc(1)Man(9)GlcNAc(2)-PP-Dol to produce Glc(2)Man(9)GlcNAc(2)-PP-Dol. This chain is Dolichyl pyrophosphate Glc1Man9GlcNAc2 alpha-1,3-glucosyltransferase, found in Caenorhabditis elegans.